Consider the following 330-residue polypeptide: L-tryptophan isonitrile synthase AmbI2 (330 aa).

The protein belongs to the isocyanide synthase family.

It catalyses the reaction D-ribulose 5-phosphate + L-tryptophan = (2S)-3-(1H-indol-3-yl)-2-isocyanopropanoate + hydroxyacetone + formaldehyde + phosphate + H2O + H(+). Its function is as follows. Involved in the biosynthesis of ambiguines, a family of hapalindole-type alkaloids. Responsible for the synthesis of the isonitrile group on tryptophan using ribulose 5-phosphate as the source of the carbon atom. This Fischerella ambigua (strain UTEX 1903) protein is L-tryptophan isonitrile synthase AmbI2.